Here is a 283-residue protein sequence, read N- to C-terminus: ATP synthase gamma chain (283 aa).

This sequence belongs to the ATPase gamma chain family. In terms of assembly, F-type ATPases have 2 components, CF(1) - the catalytic core - and CF(0) - the membrane proton channel. CF(1) has five subunits: alpha(3), beta(3), gamma(1), delta(1), epsilon(1). CF(0) has three main subunits: a, b and c.

It is found in the cell inner membrane. Its function is as follows. Produces ATP from ADP in the presence of a proton gradient across the membrane. The gamma chain is believed to be important in regulating ATPase activity and the flow of protons through the CF(0) complex. This chain is ATP synthase gamma chain, found in Ehrlichia ruminantium (strain Welgevonden).